A 189-amino-acid polypeptide reads, in one-letter code: Calcyphosin (189 aa).

EF-hand domains are found at residues 21–56 (SGIQ…LGLV), 57–92 (LDTA…PMSQ), 93–128 (AREA…RTHP), and 136–172 (TEEQ…VSAS). Positions 34, 36, 38, 40, 45, 70, 72, 74, 76, 81, 106, 108, 110, and 117 each coordinate Ca(2+). Serine 40 is modified (phosphoserine; by PKA).

As to quaternary structure, monomer. Does not form oligomers in the presence of calcium.

It localises to the cytoplasm. Functionally, calcium-binding protein. May play a role in cellular signaling events (Potential). The protein is Calcyphosin (CAPS) of Bos taurus (Bovine).